The sequence spans 595 residues: UvrABC system protein C (595 aa).

Residues 14–91 enclose the GIY-YIG domain; the sequence is DSPGCYIHKD…IQENKPKYNI (78 aa). A UVR domain is found at 196 to 231; sequence DKIVNELRDKMTKASELMEFERAAEYRDLIEGIGLL.

It belongs to the UvrC family. As to quaternary structure, interacts with UvrB in an incision complex.

It localises to the cytoplasm. In terms of biological role, the UvrABC repair system catalyzes the recognition and processing of DNA lesions. UvrC both incises the 5' and 3' sides of the lesion. The N-terminal half is responsible for the 3' incision and the C-terminal half is responsible for the 5' incision. The polypeptide is UvrABC system protein C (Streptococcus mutans serotype c (strain ATCC 700610 / UA159)).